A 126-amino-acid chain; its full sequence is Phosphoribosyl-AMP cyclohydrolase (126 aa).

Residue Asp-77 coordinates Mg(2+). Residue Cys-78 coordinates Zn(2+). Residues Asp-79 and Asp-81 each contribute to the Mg(2+) site. The Zn(2+) site is built by Cys-95 and Cys-102.

It belongs to the PRA-CH family. As to quaternary structure, homodimer. The cofactor is Mg(2+). Requires Zn(2+) as cofactor.

It localises to the cytoplasm. The enzyme catalyses 1-(5-phospho-beta-D-ribosyl)-5'-AMP + H2O = 1-(5-phospho-beta-D-ribosyl)-5-[(5-phospho-beta-D-ribosylamino)methylideneamino]imidazole-4-carboxamide. The protein operates within amino-acid biosynthesis; L-histidine biosynthesis; L-histidine from 5-phospho-alpha-D-ribose 1-diphosphate: step 3/9. Its function is as follows. Catalyzes the hydrolysis of the adenine ring of phosphoribosyl-AMP. The polypeptide is Phosphoribosyl-AMP cyclohydrolase (Cellvibrio japonicus (strain Ueda107) (Pseudomonas fluorescens subsp. cellulosa)).